The chain runs to 134 residues: Cytochrome b5 (134 aa).

Residues 5–81 (KKVLGFEEVS…MEKYYIGEID (77 aa)) form the Cytochrome b5 heme-binding domain. His40 and His64 together coordinate heme. Residues 107-127 (FMIKILQFLVPILILGLALVV) form a helical membrane-spanning segment.

The protein belongs to the cytochrome b5 family.

It localises to the endoplasmic reticulum membrane. The protein localises to the microsome membrane. In terms of biological role, membrane bound hemoprotein which function as an electron carrier for several membrane bound oxygenases. The chain is Cytochrome b5 (CYB5) from Brassica oleracea var. botrytis (Cauliflower).